The following is a 448-amino-acid chain: Methionine aminopeptidase 2-1 (448 aa).

Residues 1–90 are disordered; sequence MAAQASEKLE…PPRVPVSSLF (90 aa). Residues 22–33 are compositionally biased toward low complexity; that stretch reads AAGPAKAGQADA. The segment covering 34-46 has biased composition (acidic residues); that stretch reads GEVEDESDDDADD. The segment covering 47–58 has biased composition (low complexity); that stretch reads AGAAADGAANGA. Residues 59-74 are compositionally biased toward basic residues; sequence AKKKKKRKSKKKKKGG. Residues 75–88 are compositionally biased toward low complexity; that stretch reads AKVQSSPPRVPVSS. Residue histidine 198 participates in substrate binding. A divalent metal cation-binding residues include aspartate 218, aspartate 229, and histidine 301. Histidine 309 is a substrate binding site. A divalent metal cation contacts are provided by glutamate 334 and glutamate 429.

It belongs to the peptidase M24A family. Methionine aminopeptidase eukaryotic type 2 subfamily. Co(2+) is required as a cofactor. It depends on Zn(2+) as a cofactor. Requires Mn(2+) as cofactor. The cofactor is Fe(2+).

Its subcellular location is the cytoplasm. The catalysed reaction is Release of N-terminal amino acids, preferentially methionine, from peptides and arylamides.. Cotranslationally removes the N-terminal methionine from nascent proteins. The N-terminal methionine is often cleaved when the second residue in the primary sequence is small and uncharged (Met-Ala-, Cys, Gly, Pro, Ser, Thr, or Val). This is Methionine aminopeptidase 2-1 from Emericella nidulans (strain FGSC A4 / ATCC 38163 / CBS 112.46 / NRRL 194 / M139) (Aspergillus nidulans).